The sequence spans 39 residues: Gonadal protein gdl-ORF39 (39 aa).

In bundles of maturing sperm of larval, pupal and adult males.

The polypeptide is Gonadal protein gdl-ORF39 (gdl-ORF39) (Drosophila melanogaster (Fruit fly)).